Reading from the N-terminus, the 2924-residue chain is Probable polyketide synthase 6 (2924 aa).

The 432-residue stretch at 11 to 442 (EKGVAIVGIG…GSNCCLLISE (432 aa)) folds into the Ketosynthase family 3 (KS3) domain. Catalysis depends on for beta-ketoacyl synthase activity residues cysteine 181, histidine 323, and histidine 362. Residues 635–668 (GVNPSFILGHSLGEISASYCSGMIDLDTFCYTVY) form an acyl/malonyl transferase region. Serine 645 acts as the For acyl/malonyl transferase activity in catalysis. An N-terminal hotdog fold region spans residues 925–1047 (IDHLGLSNSY…SNFQLLDHGN (123 aa)). The 286-residue stretch at 925–1210 (IDHLGLSNSY…CKSLIPIKDS (286 aa)) folds into the PKS/mFAS DH domain. Histidine 959 serves as the catalytic Proton acceptor; for dehydratase activity. The tract at residues 1064 to 1210 (NLSKLTKNEL…CKSLIPIKDS (147 aa)) is C-terminal hotdog fold. Aspartate 1122 (proton donor; for dehydratase activity) is an active-site residue. The Carrier domain maps to 2431–2508 (TGNKNIDELF…ISIKMILNSL (78 aa)). An O-(pantetheine 4'-phosphoryl)serine modification is found at serine 2468. Residues 2551-2571 (KIILLTGTTGFLGGFLLFNML) traverse the membrane as a helical segment.

Pantetheine 4'-phosphate is required as a cofactor.

The protein resides in the membrane. In terms of biological role, probable polyketide synthase. This chain is Probable polyketide synthase 6 (pks6), found in Dictyostelium discoideum (Social amoeba).